The chain runs to 329 residues: Elongation factor Ts (329 aa).

The segment at 79–82 is involved in Mg(2+) ion dislocation from EF-Tu; that stretch reads TDFV.

It belongs to the EF-Ts family.

The protein resides in the cytoplasm. Its function is as follows. Associates with the EF-Tu.GDP complex and induces the exchange of GDP to GTP. It remains bound to the aminoacyl-tRNA.EF-Tu.GTP complex up to the GTP hydrolysis stage on the ribosome. In Parabacteroides distasonis (strain ATCC 8503 / DSM 20701 / CIP 104284 / JCM 5825 / NCTC 11152), this protein is Elongation factor Ts.